Here is a 137-residue protein sequence, read N- to C-terminus: Large ribosomal subunit protein uL16 (137 aa).

The protein belongs to the universal ribosomal protein uL16 family. As to quaternary structure, part of the 50S ribosomal subunit.

Functionally, binds 23S rRNA and is also seen to make contacts with the A and possibly P site tRNAs. This chain is Large ribosomal subunit protein uL16, found in Nitrobacter hamburgensis (strain DSM 10229 / NCIMB 13809 / X14).